Here is a 428-residue protein sequence, read N- to C-terminus: Putative UDP-glucose 6-dehydrogenase YtcA (428 aa).

The signal sequence occupies residues 1–23 (MKICVVGAGYVGLTLSAALASIG). NAD(+) contacts are provided by residues 2-19 (KICV…SAAL), V11, D30, K35, T118, and E152. Substrate is bound by residues 148-152 (EFLRE), K203, N207, 248-252 (FLQAG), and G256. C259 (nucleophile) is an active-site residue. K262 lines the NAD(+) pocket. Residue K319 participates in substrate binding. R326 contributes to the NAD(+) binding site.

The protein belongs to the UDP-glucose/GDP-mannose dehydrogenase family.

It catalyses the reaction UDP-alpha-D-glucose + 2 NAD(+) + H2O = UDP-alpha-D-glucuronate + 2 NADH + 3 H(+). It participates in nucleotide-sugar biosynthesis; UDP-alpha-D-glucuronate biosynthesis; UDP-alpha-D-glucuronate from UDP-alpha-D-glucose: step 1/1. Its function is as follows. Catalyzes the conversion of UDP-glucose into UDP-glucuronate, one of the precursors of teichuronic acid. The chain is Putative UDP-glucose 6-dehydrogenase YtcA (ytcA) from Bacillus subtilis (strain 168).